The chain runs to 248 residues: MYKLVLVRHGESEWNKENLFTGWTDVKLSDKGVDEAIEAGLLLKQEGYFFDIAFSSLLSRANDTLNIILKELGQSYISVKKTWRLNERHYGALQGLNKSETAAKYGEDKVLIWRRSYDVPPMSLDESDDRHPIKDPRYKYIPKRELPSTECLKDTIARVIPYWIDEIAKEILEGKKVIVAAHGNSLRALVKYLDNLSEEDVLKLNIPTGIPLVYELDKDLNPIKHYYLGDENKIKKAMESVASQGKLR.

Residues 8–15, 21–22, arginine 60, 87–90, lysine 98, 114–115, and 183–184 each bind substrate; these read RHGESEWN, TG, ERHY, RR, and GN. Residue histidine 9 is the Tele-phosphohistidine intermediate of the active site. Residue glutamate 87 is the Proton donor/acceptor of the active site.

It belongs to the phosphoglycerate mutase family. BPG-dependent PGAM subfamily.

The catalysed reaction is (2R)-2-phosphoglycerate = (2R)-3-phosphoglycerate. It functions in the pathway carbohydrate degradation; glycolysis; pyruvate from D-glyceraldehyde 3-phosphate: step 3/5. Catalyzes the interconversion of 2-phosphoglycerate and 3-phosphoglycerate. This chain is 2,3-bisphosphoglycerate-dependent phosphoglycerate mutase, found in Borreliella afzelii (strain PKo) (Borrelia afzelii).